We begin with the raw amino-acid sequence, 281 residues long: Acyl-[acyl-carrier-protein]--UDP-N-acetylglucosamine O-acyltransferase (281 aa).

Belongs to the transferase hexapeptide repeat family. LpxA subfamily. In terms of assembly, homotrimer.

The protein resides in the cytoplasm. The enzyme catalyses a (3R)-hydroxyacyl-[ACP] + UDP-N-acetyl-alpha-D-glucosamine = a UDP-3-O-[(3R)-3-hydroxyacyl]-N-acetyl-alpha-D-glucosamine + holo-[ACP]. Its pathway is glycolipid biosynthesis; lipid IV(A) biosynthesis; lipid IV(A) from (3R)-3-hydroxytetradecanoyl-[acyl-carrier-protein] and UDP-N-acetyl-alpha-D-glucosamine: step 1/6. Involved in the biosynthesis of lipid A, a phosphorylated glycolipid that anchors the lipopolysaccharide to the outer membrane of the cell. The protein is Acyl-[acyl-carrier-protein]--UDP-N-acetylglucosamine O-acyltransferase of Rickettsia bellii (strain OSU 85-389).